A 418-amino-acid polypeptide reads, in one-letter code: UDP-N-acetylglucosamine 1-carboxyvinyltransferase (418 aa).

23-24 provides a ligand contact to phosphoenolpyruvate; the sequence is KN. R93 is a UDP-N-acetyl-alpha-D-glucosamine binding site. The active-site Proton donor is the D117. 2 residues coordinate UDP-N-acetyl-alpha-D-glucosamine: D305 and V327.

It belongs to the EPSP synthase family. MurA subfamily.

The protein resides in the cytoplasm. The enzyme catalyses phosphoenolpyruvate + UDP-N-acetyl-alpha-D-glucosamine = UDP-N-acetyl-3-O-(1-carboxyvinyl)-alpha-D-glucosamine + phosphate. Its pathway is cell wall biogenesis; peptidoglycan biosynthesis. Cell wall formation. Adds enolpyruvyl to UDP-N-acetylglucosamine. This Mycobacterium leprae (strain TN) protein is UDP-N-acetylglucosamine 1-carboxyvinyltransferase.